Here is a 643-residue protein sequence, read N- to C-terminus: Tigger transposable element-derived protein 5 (643 aa).

The segment at 1–50 (MYSAGPPAVPAPRRCRRPPPGRPMQPPRPPAPAPVPAARPPPPAPGPRPR) is disordered. Pro residues predominate over residues 20 to 48 (PGRPMQPPRPPAPAPVPAARPPPPAPGPR). Residues 52–103 (AVKMAFRKAYSIKDKLQAIERVKGGERQASVCRDFGVPGGTLRGWLKDEPKL) form the HTH psq-type domain. 2 consecutive DNA-binding regions (H-T-H motif) follow at residues 79 to 99 (QASV…WLKD) and 150 to 183 (PLIQ…WQKR). The region spanning 117–190 (QRKKMRLANE…QKRHGISSQR (74 aa)) is the HTH CENPB-type domain. The interval 197-236 (PVAAGPAPGPPVKQEPAQPTRAGPLPDRAASTPAPAEGGY) is disordered. The DDE-1 domain occupies 238 to 358 (DEQIYNANVT…LQQKAVLLVA (121 aa)). The tract at residues 366-395 (EARMPALEESEETRRRCRPEPTGPPEELQT) is disordered.

The protein belongs to the tigger transposable element derived protein family.

It is found in the nucleus. This Bos taurus (Bovine) protein is Tigger transposable element-derived protein 5 (TIGD5).